Reading from the N-terminus, the 180-residue chain is Inner membrane-spanning protein YciB (180 aa).

6 helical membrane-spanning segments follow: residues 4–24 (LLSEIGPVIAFFAGFFYGGGI), 25–45 (QSATLYMLITSIICITLCYII), 49–69 (VSKLSIISSTVLFVSGIITLI), 76–96 (IKIKPTILYVIFGIIFLMSGI), 118–138 (IILSYRTAAFFFFMAVVNEVV), and 150–170 (FKVFGVIPITFIFILLQLPLL).

The protein belongs to the YciB family.

Its subcellular location is the cell inner membrane. Its function is as follows. Plays a role in cell envelope biogenesis, maintenance of cell envelope integrity and membrane homeostasis. In Rickettsia typhi (strain ATCC VR-144 / Wilmington), this protein is Inner membrane-spanning protein YciB.